The primary structure comprises 580 residues: Acyl-coenzyme A synthetase ACSM3, mitochondrial (580 aa).

The N-terminal 21 residues, 1–21 (MAMLLRARCFHRLAIPDPRRI), are a transit peptide targeting the mitochondrion. An N6-succinyllysine mark is found at lysine 67 and lysine 100. An N6-acetyllysine modification is found at lysine 151. Residues 229-237 (TSGTTGPPK), 368-373 (EGYGQT), aspartate 455, arginine 470, and lysine 566 each bind ATP.

It belongs to the ATP-dependent AMP-binding enzyme family. It depends on Mg(2+) as a cofactor. Mn(2+) is required as a cofactor.

The protein resides in the mitochondrion. Its subcellular location is the mitochondrion matrix. It carries out the reaction a medium-chain fatty acid + ATP + CoA = a medium-chain fatty acyl-CoA + AMP + diphosphate. The enzyme catalyses propanoate + ATP + CoA = propanoyl-CoA + AMP + diphosphate. It catalyses the reaction butanoate + ATP + CoA = butanoyl-CoA + AMP + diphosphate. The catalysed reaction is 2-methylpropanoate + ATP + CoA = 2-methylpropanoyl-CoA + AMP + diphosphate. It carries out the reaction 2-methylbutanoate + ATP + CoA = 2-methylbutanoyl-CoA + AMP + diphosphate. The enzyme catalyses octanoate + ATP + CoA = octanoyl-CoA + AMP + diphosphate. Its function is as follows. Catalyzes the activation of fatty acids by CoA to produce an acyl-CoA, the first step in fatty acid metabolism. Capable of activating medium-chain fatty acids with a preference for isobutyrate among fatty acids with 2-6 carbon atoms. The chain is Acyl-coenzyme A synthetase ACSM3, mitochondrial (Acsm3) from Rattus norvegicus (Rat).